A 340-amino-acid chain; its full sequence is 4-dimethylallyltryptophan N-methyltransferase easF (340 aa).

This sequence belongs to the methyltransferase superfamily. Homodimer.

The catalysed reaction is 4-(3-methylbut-2-enyl)-L-tryptophan + S-adenosyl-L-methionine = 4-(3-methylbut-2-enyl)-L-abrine + S-adenosyl-L-homocysteine + H(+). It participates in alkaloid biosynthesis; ergot alkaloid biosynthesis. Its function is as follows. 4-dimethylallyltryptophan N-methyltransferase; part of the gene cluster that mediates the biosynthesis of fungal ergot alkaloid. DmaW catalyzes the first step of ergot alkaloid biosynthesis by condensing dimethylallyl diphosphate (DMAP) and tryptophan to form 4-dimethylallyl-L-tryptophan. The second step is catalyzed by the methyltransferase easF that methylates 4-dimethylallyl-L-tryptophan in the presence of S-adenosyl-L-methionine, resulting in the formation of 4-dimethylallyl-L-abrine. The catalase easC and the FAD-dependent oxidoreductase easE then transform 4-dimethylallyl-L-abrine to chanoclavine-I which is further oxidized by easD in the presence of NAD(+), resulting in the formation of chanoclavine-I aldehyde. Chanoclavine-I aldehyde is the precursor of ergoamides and ergopeptines in Clavicipitaceae, and clavine-type alcaloids such as fumiclavine in Trichocomaceae. However, the metabolites downstream of chanoclavine-I aldehyde in Arthrodermataceae have not been identified yet. This is 4-dimethylallyltryptophan N-methyltransferase easF from Arthroderma benhamiae (strain ATCC MYA-4681 / CBS 112371) (Trichophyton mentagrophytes).